Here is a 30-residue protein sequence, read N- to C-terminus: Acidic phospholipase A2 homolog cannitoxin gamma chain (30 aa).

As to quaternary structure, heterotrimer of alpha, beta, and gamma chains; non-covalently linked. Glycosylated. Expressed by the venom gland.

Its subcellular location is the secreted. In terms of biological role, heterotrimer: Snake venom phospholipase A2 (PLA2) heterotrimer that acts as a potent presynaptic neurotoxin by blocking synaptic transmission and synaptic vesicle recycling. Enzymatic activity is essential for the neurotoxic effects. May act by binding in a calcium-dependent fashion to neurotonal pentraxin-1 (NPTX1) and neurotonal pentraxin-2 (NPTX2), but not to neuronal pentraxin receptor (NPTXR). Also binds to taipoxin-associated calcium binding protein 49 (RCN2), a protein localized in the lumen of endoplasmic reticulum. Monomer (gamma chain): Snake venom phospholipase A2 homolog that is neither toxic nor enzymatically active. Does not bind calcium. This chain is Acidic phospholipase A2 homolog cannitoxin gamma chain, found in Oxyuranus scutellatus canni (Papuan taipan).